Reading from the N-terminus, the 179-residue chain is Peptide deformylase (179 aa).

Positions 102 and 144 each coordinate Fe cation. The active site involves glutamate 145. Histidine 148 is a binding site for Fe cation.

Belongs to the polypeptide deformylase family. It depends on Fe(2+) as a cofactor.

The catalysed reaction is N-terminal N-formyl-L-methionyl-[peptide] + H2O = N-terminal L-methionyl-[peptide] + formate. In terms of biological role, removes the formyl group from the N-terminal Met of newly synthesized proteins. Requires at least a dipeptide for an efficient rate of reaction. N-terminal L-methionine is a prerequisite for activity but the enzyme has broad specificity at other positions. The polypeptide is Peptide deformylase (Wolbachia sp. subsp. Drosophila simulans (strain wRi)).